The following is an 856-amino-acid chain: Cyclic di-GMP phosphodiesterase PdeB (856 aa).

Helical transmembrane passes span 7–27 (ILVF…YCLG) and 230–250 (WVSL…YVWL). The 48-residue stretch at 303 to 350 (QKERGKITLESIAEAVILTDIEAKVIYMNPKAETLLEVASSNAVGESL) folds into the PAS domain. The GGDEF domain maps to 454 to 587 (RSLAVCYLDL…GTNQIHIYDD (134 aa)). The region spanning 598–852 (APKWAVRIAQ…SYCEQFETRL (255 aa)) is the EAL domain.

It localises to the cell membrane. The enzyme catalyses 3',3'-c-di-GMP + H2O = 5'-phosphoguanylyl(3'-&gt;5')guanosine + H(+). Its function is as follows. Affects motility and biofilm formation, and is linked to the regulation of sulfate uptake and assimilation. This chain is Cyclic di-GMP phosphodiesterase PdeB (pdeB), found in Shewanella oneidensis (strain ATCC 700550 / JCM 31522 / CIP 106686 / LMG 19005 / NCIMB 14063 / MR-1).